A 152-amino-acid polypeptide reads, in one-letter code: Ribonuclease HI (152 aa).

The RNase H type-1 domain maps to Met-1–Glu-142. Residues Asp-10, Glu-48, Asp-70, and Asp-134 each coordinate Mg(2+).

This sequence belongs to the RNase H family. In terms of assembly, monomer. It depends on Mg(2+) as a cofactor.

Its subcellular location is the cytoplasm. The enzyme catalyses Endonucleolytic cleavage to 5'-phosphomonoester.. Endonuclease that specifically degrades the RNA of RNA-DNA hybrids. In Rickettsia prowazekii (strain Madrid E), this protein is Ribonuclease HI (rnhA).